We begin with the raw amino-acid sequence, 129 residues long: Small ribosomal subunit protein uS12 (129 aa).

2 disordered regions span residues 1 to 25 (MPTY…PALE) and 110 to 129 (RKQG…VTKK). Over residues 10–20 (FGRKSKTRKTK) the composition is skewed to basic residues.

It belongs to the universal ribosomal protein uS12 family. As to quaternary structure, part of the 30S ribosomal subunit. Contacts proteins S8 and S17. May interact with IF1 in the 30S initiation complex.

In terms of biological role, with S4 and S5 plays an important role in translational accuracy. Functionally, interacts with and stabilizes bases of the 16S rRNA that are involved in tRNA selection in the A site and with the mRNA backbone. Located at the interface of the 30S and 50S subunits, it traverses the body of the 30S subunit contacting proteins on the other side and probably holding the rRNA structure together. The combined cluster of proteins S8, S12 and S17 appears to hold together the shoulder and platform of the 30S subunit. This chain is Small ribosomal subunit protein uS12, found in Rickettsia conorii (strain ATCC VR-613 / Malish 7).